We begin with the raw amino-acid sequence, 337 residues long: Schlafen family member 1 (337 aa).

Positions 147 to 166 (AGGRSPSARPSDRPGDDTQE) are disordered. Basic and acidic residues predominate over residues 156 to 166 (PSDRPGDDTQE).

Belongs to the Schlafen family. As to quaternary structure, interacts with DNAJB6; promoting nuclear translocation and ability to promote cell-cycle arrest. As to expression, mainly expressed in the thymus, lymph node and spleen. Specifically expressed in T-lineage cells, but not in B-cells. Strongly up-regulated during the differentiation from CD4(+)CD8(+) double-positive (DP) to CD4(+) or CD8(+) single-positive (SP) thymocytes. Highly expressed in quiescent single-positive thymocytes and T-cells. The expression substantially decreases after TCR (T-cell receptor)-mediated activation.

It localises to the cytoplasm. The protein localises to the nucleus. In terms of biological role, protein expressed in resting T-cells, which is required for maintaining T-cells in the quiescent state. Acts by promoting cell-cycle arrest of T-cells through inhibiting the expression of cyclin-D1 (CCND1). This chain is Schlafen family member 1, found in Mus musculus (Mouse).